The chain runs to 247 residues: MKILISNDDGYQAPGIVQLAQSLTQEHEIIVVAPSENKSASSSSLTFDNPLRPIQISNNVYKIDATPSDCVHLALCGFLNEKIDLVVTGINFGANLGDDVIYSGTVAGAIEGRFLGLPSVAISLASWKGQHFETAGIIAKQLINQISHTQLSHDTVLNVNVPDVSLNYIKGFQTTRLGKRHMSEQSVADKDDPTLYWIGENGKEADNGVGTDFHAIANYYVSVTPLQIDLTKYNEIDTVSKWLNQIK.

Residues Asp8, Asp9, Ser39, and Asn91 each contribute to the a divalent metal cation site.

This sequence belongs to the SurE nucleotidase family. The cofactor is a divalent metal cation.

The protein localises to the cytoplasm. The catalysed reaction is a ribonucleoside 5'-phosphate + H2O = a ribonucleoside + phosphate. Functionally, nucleotidase that shows phosphatase activity on nucleoside 5'-monophosphates. This chain is 5'-nucleotidase SurE, found in Ruthia magnifica subsp. Calyptogena magnifica.